Consider the following 250-residue polypeptide: Probable aquaporin TIP-type (250 aa).

A run of 2 helical transmembrane segments spans residues 22–42 (AGLA…GSGI) and 56–76 (AGLI…VSVG). Positions 85–87 (NPA) match the NPA 1 motif. The next 3 helical transmembrane spans lie at 104–124 (IVYI…LVFV), 138–158 (VGVG…VYTV), and 170–190 (IGII…LVGG). Positions 198 to 200 (NPA) match the NPA 2 motif. The chain crosses the membrane as a helical span at residues 218–238 (YWAGPLIGGGIAGLVYEVLFI).

Belongs to the MIP/aquaporin (TC 1.A.8) family. TIP (TC 1.A.8.10) subfamily.

It is found in the membrane. In terms of biological role, aquaporins facilitate the transport of water and small neutral solutes across cell membranes. May have a role in buffering osmotic fluctations in the highly compartmented vacuole of arbuscule cells. This is Probable aquaporin TIP-type (AQP1) from Medicago truncatula (Barrel medic).